Here is a 64-residue protein sequence, read N- to C-terminus: MAVQKSRVTPSRRGQRRSHDALTAKQLSTDPTSGEIHLRHHITADGYYRGKKVIATKSSAVQED.

A disordered region spans residues 1 to 35; sequence MAVQKSRVTPSRRGQRRSHDALTAKQLSTDPTSGE.

It belongs to the bacterial ribosomal protein bL32 family.

This is Large ribosomal subunit protein bL32 from Xanthomonas axonopodis pv. citri (strain 306).